The chain runs to 101 residues: Large ribosomal subunit protein uL23 (101 aa).

Belongs to the universal ribosomal protein uL23 family. In terms of assembly, part of the 50S ribosomal subunit. Contacts protein L29, and trigger factor when it is bound to the ribosome.

Its function is as follows. One of the early assembly proteins it binds 23S rRNA. One of the proteins that surrounds the polypeptide exit tunnel on the outside of the ribosome. Forms the main docking site for trigger factor binding to the ribosome. This Tolumonas auensis (strain DSM 9187 / NBRC 110442 / TA 4) protein is Large ribosomal subunit protein uL23.